The following is a 334-amino-acid chain: Dual specificity mitogen-activated protein kinase kinase 6 (334 aa).

The segment covering 1–11 has biased composition (basic residues); the sequence is MSQSKGKKRNP. Positions 1–34 are disordered; that stretch reads MSQSKGKKRNPGLKIPKEAFEQPQTSSTPPRDLD. Positions 4-19 are d domain; sequence SKGKKRNPGLKIPKEA. Residues 53–314 enclose the Protein kinase domain; it reads LEPIVELGRG…YPELMQHPFF (262 aa). ATP is bound by residues 59–67 and Lys82; that span reads LGRGAYGVV. The active-site Proton acceptor is Asp179. Ser207 carries the phosphoserine; by MAPK3 modification. Thr211 is subject to Phosphothreonine; by MAPK3. Residues 311 to 334 are DVD domain; the sequence is HPFFTLHESKATDVASFVKSILGD.

This sequence belongs to the protein kinase superfamily. STE Ser/Thr protein kinase family. MAP kinase kinase subfamily. In terms of assembly, dimer. Interacts (via its D domain) with its substrates MAPK11, MAPK12, MAPK13 and MAPK14. Interacts (via its DVD domain) with MAP3Ks activators like MAP3K5/ASK1, MAP3K1/MEKK1, MAP3K2/MEKK2, MAP3K3/MEKK3, MAP3K4/MEKK4, MAP3K7/TAK1, MAP3K11/MLK3 and MAP3K17/TAOK2. Interacts with DCTN1. Interacts with EIF2AK2/PKR. Post-translationally, weakly autophosphorylated. Phosphorylated at Ser-207 and Thr-211 by the majority of M3Ks, such as MAP3K5/ASK1, MAP3K1/MEKK1, MAP3K2/MEKK2, MAP3K3/MEKK3, MAP3K4/MEKK4, MAP3K7/TAK1, MAP3K11/MLK3 and MAP3K17/TAOK2. In response to genotoxic stress, MAP3K-phosphorylated MAP2K6 is ubiquitinated and degraded by the SCF(FBXO31) complex.

The protein localises to the nucleus. It localises to the cytoplasm. It is found in the cytoskeleton. The catalysed reaction is L-seryl-[protein] + ATP = O-phospho-L-seryl-[protein] + ADP + H(+). It carries out the reaction L-threonyl-[protein] + ATP = O-phospho-L-threonyl-[protein] + ADP + H(+). The enzyme catalyses L-tyrosyl-[protein] + ATP = O-phospho-L-tyrosyl-[protein] + ADP + H(+). Activated by dual phosphorylation on Ser-207 and Thr-211 in response to a variety of cellular stresses, including UV radiation, osmotic shock, hypoxia, inflammatory cytokines, interferon gamma (IFNG), and less often by growth factors. MAP2K6/MKK6 is activated by the majority of M3Ks, such as MAP3K5/ASK1, MAP3K1/MEKK1, MAP3K2/MEKK2, MAP3K3/MEKK3, MAP3K4/MEKK4, MAP3K7/TAK1, MAP3K11/MLK3 and MAP3K17/TAOK2. Its function is as follows. Dual specificity protein kinase which acts as an essential component of the MAP kinase signal transduction pathway. With MAP3K3/MKK3, catalyzes the concomitant phosphorylation of a threonine and a tyrosine residue in the MAP kinases p38 MAPK11, MAPK12, MAPK13 and MAPK14 and plays an important role in the regulation of cellular responses to cytokines and all kinds of stresses. Especially, MAP2K3/MKK3 and MAP2K6/MKK6 are both essential for the activation of MAPK11 and MAPK13 induced by environmental stress, whereas MAP2K6/MKK6 is the major MAPK11 activator in response to TNF. MAP2K6/MKK6 also phosphorylates and activates PAK6. The p38 MAP kinase signal transduction pathway leads to direct activation of transcription factors. Nuclear targets of p38 MAP kinase include the transcription factors ATF2 and ELK1. Within the p38 MAPK signal transduction pathway, MAP3K6/MKK6 mediates phosphorylation of STAT4 through MAPK14 activation, and is therefore required for STAT4 activation and STAT4-regulated gene expression in response to IL-12 stimulation. The pathway is also crucial for IL-6-induced SOCS3 expression and down-regulation of IL-6-mediated gene induction; and for IFNG-dependent gene transcription. Has a role in osteoclast differentiation through NF-kappa-B transactivation by TNFSF11, and in endochondral ossification and since SOX9 is another likely downstream target of the p38 MAPK pathway. MAP2K6/MKK6 mediates apoptotic cell death in thymocytes. Acts also as a regulator for melanocytes dendricity, through the modulation of Rho family GTPases. The protein is Dual specificity mitogen-activated protein kinase kinase 6 (MAP2K6) of Bos taurus (Bovine).